Here is a 337-residue protein sequence, read N- to C-terminus: Tetraacyldisaccharide 4'-kinase (337 aa).

T52 to T59 contacts ATP.

The protein belongs to the LpxK family.

The enzyme catalyses a lipid A disaccharide + ATP = a lipid IVA + ADP + H(+). It participates in glycolipid biosynthesis; lipid IV(A) biosynthesis; lipid IV(A) from (3R)-3-hydroxytetradecanoyl-[acyl-carrier-protein] and UDP-N-acetyl-alpha-D-glucosamine: step 6/6. Its function is as follows. Transfers the gamma-phosphate of ATP to the 4'-position of a tetraacyldisaccharide 1-phosphate intermediate (termed DS-1-P) to form tetraacyldisaccharide 1,4'-bis-phosphate (lipid IVA). This chain is Tetraacyldisaccharide 4'-kinase, found in Methylobacterium nodulans (strain LMG 21967 / CNCM I-2342 / ORS 2060).